We begin with the raw amino-acid sequence, 88 residues long: Mitochondrial import inner membrane translocase subunit TIM9 (88 aa).

Positions 35–59 match the Twin CX3C motif motif; it reads CFDDCVNDFTSNNLTTKETGCITKC. Disulfide bonds link C35/C59 and C39/C55.

This sequence belongs to the small Tim family. As to quaternary structure, heterohexamer; composed of 3 copies of TIM9 and 3 copies of TIM10, named soluble 70 kDa complex. Associates with the TIM22 complex, whose core is composed of TIM22 and TIM54. Interacts with the transmembrane regions of multi-pass transmembrane proteins in transit.

The protein resides in the mitochondrion inner membrane. In terms of biological role, mitochondrial intermembrane chaperone that participates in the import and insertion of multi-pass transmembrane proteins into the mitochondrial inner membrane. Also required for the transfer of beta-barrel precursors from the TOM complex to the sorting and assembly machinery (SAM complex) of the outer membrane. Acts as a chaperone-like protein that protects the hydrophobic precursors from aggregation and guide them through the mitochondrial intermembrane space. The chain is Mitochondrial import inner membrane translocase subunit TIM9 (TIM9) from Debaryomyces hansenii (strain ATCC 36239 / CBS 767 / BCRC 21394 / JCM 1990 / NBRC 0083 / IGC 2968) (Yeast).